The chain runs to 115 residues: Aspartate 1-decarboxylase (115 aa).

The active-site Schiff-base intermediate with substrate; via pyruvic acid is the Ser25. Ser25 carries the pyruvic acid (Ser) modification. Substrate is bound at residue Thr57. The active-site Proton donor is the Tyr58. 71–73 (GAA) provides a ligand contact to substrate.

This sequence belongs to the PanD family. Heterooctamer of four alpha and four beta subunits. It depends on pyruvate as a cofactor. Is synthesized initially as an inactive proenzyme, which is activated by self-cleavage at a specific serine bond to produce a beta-subunit with a hydroxyl group at its C-terminus and an alpha-subunit with a pyruvoyl group at its N-terminus.

The protein resides in the cytoplasm. The enzyme catalyses L-aspartate + H(+) = beta-alanine + CO2. It participates in cofactor biosynthesis; (R)-pantothenate biosynthesis; beta-alanine from L-aspartate: step 1/1. In terms of biological role, catalyzes the pyruvoyl-dependent decarboxylation of aspartate to produce beta-alanine. The chain is Aspartate 1-decarboxylase from Campylobacter curvus (strain 525.92).